A 525-amino-acid chain; its full sequence is Probable pectinesterase/pectinesterase inhibitor 44 (525 aa).

A signal peptide spans 1–19; it reads MSCLKYFLILLMLGLCVSS. A pectinesterase inhibitor 44 region spans residues 30–153; sequence VPASEFVSSI…YSMLRELLPL (124 aa). A glycan (N-linked (GlcNAc...) asparagine) is linked at Asn98. The segment at 157–192 is disordered; that stretch reads EQKPKAVSKPGPIAKGPKAPPGRKLRDTDEDESLQF. Positions 212–509 are pectinesterase 44; the sequence is DVSVALDGTG…FTVSQFIKGN (298 aa). N-linked (GlcNAc...) asparagine glycosylation is found at Asn222 and Asn278. Substrate-binding residues include Thr287 and Gln317. Asp340 functions as the Proton donor; for pectinesterase activity in the catalytic mechanism. Residues Cys354 and Cys374 are joined by a disulfide bond. Asp361 (nucleophile; for pectinesterase activity) is an active-site residue. Asn409 and Asn421 each carry an N-linked (GlcNAc...) asparagine glycan. Positions 429 and 431 each coordinate substrate. 3 N-linked (GlcNAc...) asparagine glycosylation sites follow: Asn443, Asn492, and Asn499.

The protein in the N-terminal section; belongs to the PMEI family. This sequence in the C-terminal section; belongs to the pectinesterase family. Expressed in siliques.

The protein resides in the secreted. It localises to the cell wall. The catalysed reaction is [(1-&gt;4)-alpha-D-galacturonosyl methyl ester](n) + n H2O = [(1-&gt;4)-alpha-D-galacturonosyl](n) + n methanol + n H(+). It functions in the pathway glycan metabolism; pectin degradation; 2-dehydro-3-deoxy-D-gluconate from pectin: step 1/5. In terms of biological role, acts in the modification of cell walls via demethylesterification of cell wall pectin. The chain is Probable pectinesterase/pectinesterase inhibitor 44 (PME44) from Arabidopsis thaliana (Mouse-ear cress).